The sequence spans 56 residues: Ovomucoid (56 aa).

Residues 6–56 (VDCSEYPKPACTLEYRPLCGSDSKTYANKCNFCNAVVESNGTLTLSHFGKC) form the Kazal-like domain. Cystine bridges form between Cys8-Cys38, Cys16-Cys35, and Cys24-Cys56. The N-linked (GlcNAc...) asparagine glycan is linked to Asn45.

It localises to the secreted. The protein is Ovomucoid of Oreortyx pictus (Mountain quail).